We begin with the raw amino-acid sequence, 46 residues long: Photosystem II reaction center protein K (46 aa).

Residues 1–9 (MLTLLNTFA) constitute a propeptide that is removed on maturation. Residues 25–45 (LPLIPLFFFLLVFVWQAAVGF) traverse the membrane as a helical segment.

Belongs to the PsbK family. In terms of assembly, PSII is composed of 1 copy each of membrane proteins PsbA, PsbB, PsbC, PsbD, PsbE, PsbF, PsbH, PsbI, PsbJ, PsbK, PsbL, PsbM, PsbT, PsbX, PsbY, Psb30/Ycf12, peripheral proteins PsbO, CyanoQ (PsbQ), PsbU, PsbV and a large number of cofactors. It forms dimeric complexes.

The protein resides in the cellular thylakoid membrane. Functionally, one of the components of the core complex of photosystem II (PSII). PSII is a light-driven water:plastoquinone oxidoreductase that uses light energy to abstract electrons from H(2)O, generating O(2) and a proton gradient subsequently used for ATP formation. It consists of a core antenna complex that captures photons, and an electron transfer chain that converts photonic excitation into a charge separation. The polypeptide is Photosystem II reaction center protein K (Prochlorococcus marinus (strain MIT 9515)).